The chain runs to 686 residues: Acyl-CoA synthetase short-chain family member 3, mitochondrial (686 aa).

The transit peptide at 1–29 (MKPSWLQCHKVTSAGGLGGPLPGSSPARG) directs the protein to the mitochondrion. 227–230 (EPGR) contacts CoA. ATP contacts are provided by residues 425–427 (GER) and 446–451 (DHWWQT). Residue K518 is modified to N6-succinyllysine. K524 is subject to N6-acetyllysine. ATP contacts are provided by D539, R554, and R565. R624 is a CoA binding site.

This sequence belongs to the ATP-dependent AMP-binding enzyme family.

The protein localises to the mitochondrion matrix. It catalyses the reaction acetate + ATP + CoA = acetyl-CoA + AMP + diphosphate. The enzyme catalyses propanoate + ATP + CoA = propanoyl-CoA + AMP + diphosphate. It carries out the reaction butanoate + ATP + CoA = butanoyl-CoA + AMP + diphosphate. In terms of biological role, catalyzes the synthesis of acetyl-CoA from short-chain fatty acids. Propionate is the preferred substrate but can also utilize acetate and butyrate with a much lower affinity. In Pongo abelii (Sumatran orangutan), this protein is Acyl-CoA synthetase short-chain family member 3, mitochondrial (ACSS3).